A 342-amino-acid chain; its full sequence is Probable deoxyhypusine synthase (342 aa).

K307 acts as the Nucleophile in catalysis.

It belongs to the deoxyhypusine synthase family. NAD(+) is required as a cofactor.

The enzyme catalyses [eIF5A protein]-L-lysine + spermidine = [eIF5A protein]-deoxyhypusine + propane-1,3-diamine. It participates in protein modification; eIF5A hypusination. Functionally, catalyzes the NAD-dependent oxidative cleavage of spermidine and the subsequent transfer of the butylamine moiety of spermidine to the epsilon-amino group of a specific lysine residue of the eIF-5A precursor protein to form the intermediate deoxyhypusine residue. The polypeptide is Probable deoxyhypusine synthase (dys) (Pyrococcus horikoshii (strain ATCC 700860 / DSM 12428 / JCM 9974 / NBRC 100139 / OT-3)).